The following is a 310-amino-acid chain: tRNA-cytidine(32) 2-sulfurtransferase (310 aa).

The PP-loop motif motif lies at 45–50 (SGGKDS). Positions 120, 123, and 211 each coordinate [4Fe-4S] cluster.

Belongs to the TtcA family. Homodimer. Requires Mg(2+) as cofactor. [4Fe-4S] cluster is required as a cofactor.

The protein resides in the cytoplasm. The catalysed reaction is cytidine(32) in tRNA + S-sulfanyl-L-cysteinyl-[cysteine desulfurase] + AH2 + ATP = 2-thiocytidine(32) in tRNA + L-cysteinyl-[cysteine desulfurase] + A + AMP + diphosphate + H(+). It functions in the pathway tRNA modification. Functionally, catalyzes the ATP-dependent 2-thiolation of cytidine in position 32 of tRNA, to form 2-thiocytidine (s(2)C32). The sulfur atoms are provided by the cysteine/cysteine desulfurase (IscS) system. The sequence is that of tRNA-cytidine(32) 2-sulfurtransferase from Shewanella baltica (strain OS195).